Consider the following 461-residue polypeptide: E3 ubiquitin-protein ligase parkin (461 aa).

In terms of domain architecture, Ubiquitin-like spans 30–90 (VNIYVKSNVG…DSTVIEVLDF (61 aa)). Ser-92 bears the Phosphoserine mark. The RING-type 0; atypical zinc-finger motif lies at 145–227 (AHFFIYCANP…SQGENDTAVP (83 aa)). Zn(2+) contacts are provided by Cys-151, Cys-155, Cys-167, and Cys-170. Thr-176 is modified (phosphothreonine). 22 residues coordinate Zn(2+): Cys-197, Cys-202, Cys-213, His-216, Cys-240, Cys-243, Cys-255, His-259, Cys-262, Cys-265, Cys-291, Cys-295, Cys-334, Cys-339, Cys-354, Cys-356, Cys-361, Cys-364, His-369, Cys-373, Cys-415, and Cys-418. The TRIAD supradomain stretch occupies residues 236–461 (KKIPCLACTD…RDCMASHWFG (226 aa)). The RING-type 1 zinc finger occupies 240 to 295 (CLACTDICDPVLVFSCDNRHVTCLECFKNYCGSRLKDRQFLSHPDFGYTLPCPAGC). 2 IBR-type zinc fingers span residues 315 to 373 (EQYH…LGEC) and 411 to 452 (LTKP…PWER). The RING-type 2; atypical zinc finger occupies 415–446 (CPKCRTSTERAGGCMHMICTRANCGFHWCWVC). Cys-428 is a catalytic residue. Cys-433, Cys-438, Cys-443, Cys-446, Cys-454, and His-458 together coordinate Zn(2+).

The protein belongs to the RBR family. Parkin subfamily. In terms of assembly, forms an E3 ubiquitin ligase complex with E2 ubiquitin-conjugating enzymes. In terms of processing, auto-ubiquitinates in an E2-dependent manner leading to its own degradation. Post-translationally, phosphorylated. Activation requires phosphorylation at Ser-92 by Pink1 and binding to Pink1-phosphorylated polyubiquitin chains. Phosphorylation at Thr-176 by Pink1 is also important for mitochondrial localization.

The protein localises to the mitochondrion. The protein resides in the cytoplasm. Its subcellular location is the cytosol. It catalyses the reaction [E2 ubiquitin-conjugating enzyme]-S-ubiquitinyl-L-cysteine + [acceptor protein]-L-lysine = [E2 ubiquitin-conjugating enzyme]-L-cysteine + [acceptor protein]-N(6)-ubiquitinyl-L-lysine.. Its pathway is protein modification; protein ubiquitination. In the autoinhibited state the side chain of Phe-460 inserts into a hydrophobic groove in RING-0, occluding the ubiquitin acceptor site Cys-428, whereas the REP repressor element binds RING-1 and blocks its E2-binding site. Activation of park requires 2 steps: (1) phosphorylation at Ser-92 by Pink1 and (2) binding to phosphorylated ubiquitin, leading to unlock repression of the catalytic Cys-428 by the RING-0 region via an allosteric mechanism and converting park to its fully-active form. According to another report, phosphorylation at Ser-92 by Pink1 is not essential for activation and only binding to phosphorylated ubiquitin is essential to unlock repression. E3 ubiquitin-protein ligase which accepts ubiquitin from E2 ubiquitin-conjugating enzymes in the form of a thioester and then directly transfers the ubiquitin to targeted substrates, such as Marf, Opa1, Sep1, Tom20 and porin. Mediates monoubiquitination as well as 'Lys-6', 'Lys-11', 'Lys-48'-linked and 'Lys-63'-linked polyubiquitination of substrates, depending on the context. Protects against mitochondrial dysfunction during cellular stress, by acting downstream of Pink1, to coordinate mitochondrial quality control mechanisms that remove and replace dysfunctional mitochondrial components. Depending on the severity of mitochondrial damage and/or dysfunction, activity ranges from preventing apoptosis and stimulating mitochondrial biogenesis to regulating mitochondrial dynamics and eliminating severely damaged mitochondria via mitophagy. Appears to be particularly important in maintaining the physiology and function of cells with high energy demands that are undergoing stress or altered metabolic environment, including spermatids, muscle cells and neurons such as the dopaminergic (DA) neurons. Activation and recruitment onto the outer membrane of damaged/dysfunctional mitochondria (OMM) requires Pink1-mediated phosphorylation of both park and ubiquitin. In depolarized mitochondria, mediates the decision between mitophagy or preventing apoptosis by inducing either the poly- or monoubiquitination of porin/VDAC; polyubiquitination of porin promotes mitophagy, while monoubiquitination of porin decreases mitochondrial calcium influx which ultimately inhibits apoptosis. When cellular stress results in irreversible mitochondrial damage, promotes the autophagic degradation of dysfunctional depolarized mitochondria (mitophagy) by promoting the ubiquitination of mitochondrial proteins. Preferentially assembles 'Lys-6'-, 'Lys-11'- and 'Lys-63'-linked polyubiquitin chains following mitochondrial damage, leading to mitophagy. In developing tissues, inhibits JNK-mediated apoptosis by negatively regulating bsk transcription. The Pink1-park pathway also promotes fission and/or inhibits fusion of damaged mitochondria by mediating the ubiquitination and subsequent degradation of proteins involved in mitochondrial fusion/fission such as Marf and Opa1. This prevents the refusion of unhealthy mitochondria with the healthy mitochondrial network and/or initiates mitochondrial fragmentation facilitating their later engulfment by autophagosomes. Regulates motility of damaged mitochondria by phosphorylating Miro which likely promotes its park-dependent degradation by the proteasome; in motor neurons, this inhibits mitochondrial intracellular anterograde transport along the axons which probably increases the chance of the mitochondria being eliminated in the soma. The Pink1-park pathway is also involved in mitochondrial regeneration processes such as promoting mitochondrial biogenesis, activating localized mitochondrial repair, promoting selective turnover of mitochondrial proteins and initiating the mitochondrial import of endogenous proteins. Involved in mitochondrial biogenesis via the ubiquitination of transcriptional repressor Paris which leads to its subsequent proteasomal degradation and allows activation of the transcription factor srl. Promotes localized mitochondrial repair by activating the translation of specific nuclear-encoded mitochondrial RNAs (nc-mtRNAs) on the mitochondrial surface, including several key electron transport chain component nc-mtRNAs. The chain is E3 ubiquitin-protein ligase parkin from Pediculus humanus subsp. corporis (Body louse).